The chain runs to 699 residues: Elongation factor G 1 (699 aa).

One can recognise a tr-type G domain in the interval Glu8 to Ile290. GTP contacts are provided by residues Ala17 to Thr24, Asp88 to His92, and Asn142 to Asp145.

This sequence belongs to the TRAFAC class translation factor GTPase superfamily. Classic translation factor GTPase family. EF-G/EF-2 subfamily.

Its subcellular location is the cytoplasm. Catalyzes the GTP-dependent ribosomal translocation step during translation elongation. During this step, the ribosome changes from the pre-translocational (PRE) to the post-translocational (POST) state as the newly formed A-site-bound peptidyl-tRNA and P-site-bound deacylated tRNA move to the P and E sites, respectively. Catalyzes the coordinated movement of the two tRNA molecules, the mRNA and conformational changes in the ribosome. The sequence is that of Elongation factor G 1 from Vibrio vulnificus (strain YJ016).